Reading from the N-terminus, the 199-residue chain is 5'-deoxynucleotidase ECA3034 (199 aa).

Residues 18–19 (RW) and His-33 each bind substrate. In terms of domain architecture, HD spans 30–142 (VSEHSLQVAF…VKQADALCAY (113 aa)). A divalent metal cation is bound by residues His-33, His-68, and Asp-69. Residues Asp-69, 77-80 (DMPT), and Asp-137 contribute to the substrate site. A divalent metal cation is bound at residue Asp-137.

It belongs to the 5DNU family. Homodimer. A divalent metal cation serves as cofactor.

It is found in the cytoplasm. The catalysed reaction is a 2'-deoxyribonucleoside 5'-phosphate + H2O = a 2'-deoxyribonucleoside + phosphate. Functionally, catalyzes the strictly specific dephosphorylation of 2'-deoxyribonucleoside 5'-monophosphates. The chain is 5'-deoxynucleotidase ECA3034 from Pectobacterium atrosepticum (strain SCRI 1043 / ATCC BAA-672) (Erwinia carotovora subsp. atroseptica).